We begin with the raw amino-acid sequence, 481 residues long: ATP synthase subunit beta, chloroplastic (481 aa).

An ATP-binding site is contributed by 163-170 (GGAGVGKT).

Belongs to the ATPase alpha/beta chains family. F-type ATPases have 2 components, CF(1) - the catalytic core - and CF(0) - the membrane proton channel. CF(1) has five subunits: alpha(3), beta(3), gamma(1), delta(1), epsilon(1). CF(0) has four main subunits: a(1), b(1), b'(1) and c(9-12).

It localises to the plastid. It is found in the chloroplast thylakoid membrane. The enzyme catalyses ATP + H2O + 4 H(+)(in) = ADP + phosphate + 5 H(+)(out). Its function is as follows. Produces ATP from ADP in the presence of a proton gradient across the membrane. The catalytic sites are hosted primarily by the beta subunits. The polypeptide is ATP synthase subunit beta, chloroplastic (Tupiella akineta (Green alga)).